The sequence spans 295 residues: Glutamyl-Q tRNA(Asp) synthetase (295 aa).

Residues 9-13 (RFAPT) and E45 each bind L-glutamate. The short motif at 12 to 22 (PTPSGFLHFGS) is the 'HIGH' region element. C101, C103, Y115, and C119 together coordinate Zn(2+). Residues Y172 and R190 each coordinate L-glutamate. Residues 228–232 (KLGKS) carry the 'KMSKS' region motif. K231 serves as a coordination point for ATP.

It belongs to the class-I aminoacyl-tRNA synthetase family. GluQ subfamily. It depends on Zn(2+) as a cofactor.

In terms of biological role, catalyzes the tRNA-independent activation of glutamate in presence of ATP and the subsequent transfer of glutamate onto a tRNA(Asp). Glutamate is transferred on the 2-amino-5-(4,5-dihydroxy-2-cyclopenten-1-yl) moiety of the queuosine in the wobble position of the QUC anticodon. The polypeptide is Glutamyl-Q tRNA(Asp) synthetase (Pseudomonas putida (strain GB-1)).